The following is a 415-amino-acid chain: Actin-like protein 7B (415 aa).

The tract at residues 1–35 is disordered; that stretch reads MATRNSPMALGTAQGDPGEAGTRPGSDAGLRDTGA. A Phosphoserine modification is found at Ser-6.

This sequence belongs to the actin family.

The protein localises to the cytoplasm. It localises to the cytoskeleton. The chain is Actin-like protein 7B (ACTL7B) from Macaca fascicularis (Crab-eating macaque).